The following is a 314-amino-acid chain: Ribonuclease Z (314 aa).

H61, H63, D65, H66, H139, D211, and H269 together coordinate Zn(2+). D65 (proton acceptor) is an active-site residue.

Belongs to the RNase Z family. As to quaternary structure, homodimer. Zn(2+) is required as a cofactor.

It catalyses the reaction Endonucleolytic cleavage of RNA, removing extra 3' nucleotides from tRNA precursor, generating 3' termini of tRNAs. A 3'-hydroxy group is left at the tRNA terminus and a 5'-phosphoryl group is left at the trailer molecule.. Functionally, zinc phosphodiesterase, which displays some tRNA 3'-processing endonuclease activity. Probably involved in tRNA maturation, by removing a 3'-trailer from precursor tRNA. The sequence is that of Ribonuclease Z from Gemmatimonas aurantiaca (strain DSM 14586 / JCM 11422 / NBRC 100505 / T-27).